Here is a 196-residue protein sequence, read N- to C-terminus: MISMDDIIREGYPTLREVANDVTLPLSDEDIILGEKMLQFLHNSQDPVMAEKMGLRGGVGLAANQLGLLKKVIAVLIPNEPEVDEDGNEIPPKEAYKMREIMYNAKVVSHSVQDAAVEGGEGCLSVDREVPGYVVRHARVTVEYYNKEGEKKKIRLKDFPAICVQHEIDHTNGVMFYDHINMNDPWEIKDGMIIVK.

Fe cation is bound by residues C123 and H166. E167 is a catalytic residue. Fe cation is bound at residue H170.

The protein belongs to the polypeptide deformylase family. Fe(2+) is required as a cofactor.

It carries out the reaction N-terminal N-formyl-L-methionyl-[peptide] + H2O = N-terminal L-methionyl-[peptide] + formate. Removes the formyl group from the N-terminal Met of newly synthesized proteins. Requires at least a dipeptide for an efficient rate of reaction. N-terminal L-methionine is a prerequisite for activity but the enzyme has broad specificity at other positions. This is Peptide deformylase from Lactococcus lactis subsp. lactis (strain IL1403) (Streptococcus lactis).